The chain runs to 304 residues: C-type lectin domain family 10 member A (304 aa).

The Cytoplasmic portion of the chain corresponds to M1–H35. Residues L36–S56 traverse the membrane as a helical; Signal-anchor for type II membrane protein segment. Over Q57–S304 the chain is Extracellular. N-linked (GlcNAc...) asparagine glycosylation is found at N74 and N166. One can recognise a C-type lectin domain in the interval C172–M298. 3 cysteine pairs are disulfide-bonded: C173/C184, C201/C296, and C274/C288.

Homooligomer. Interacts with SIGLEC1, which may act as a counter-receptor for CLEC10A in lymph node. In terms of tissue distribution, detected in lymph node in the subcapsular sinus, interfollicular regions, T and B-cell boundary and in the areas surrounding high endothelial venules (at protein level). Expressed on the surface of activated macrophages. Expressed in heart, lung, testis, skeletal muscle, spleen, brain, kidney and thymus. Expressed in P388, RAW 264.7 and M1 cell lines.

It is found in the membrane. Recognizes terminal galactose and N-acetylgalactosamine units. May participate in the interaction between tumoricidal macrophages and tumor cells. Plays a role in the recruitment of inflammatory monocytes to adipose tissue in diet-induced obesity. This Mus musculus (Mouse) protein is C-type lectin domain family 10 member A (Clec10a).